Here is a 243-residue protein sequence, read N- to C-terminus: NEDD4-binding protein 2-like 1 (243 aa).

The interval 1–38 is disordered; sequence MEDSFLQSFGRLSLQPQQQQQRQRPPRPPPRGTPPRRH.

Interacts with dynactin subunit proteins, including DCTN4, DCTN5 and DCTN5.

Might play a role in adipocyte differentiation and triglyceride accumulation. The sequence is that of NEDD4-binding protein 2-like 1 (N4BP2L1) from Homo sapiens (Human).